We begin with the raw amino-acid sequence, 377 residues long: Fructose-bisphosphate aldolase 1, chloroplastic (377 aa).

Substrate is bound by residues Arg-74 and Lys-164. Glu-204 functions as the Proton acceptor in the catalytic mechanism. Residue Lys-246 is the Schiff-base intermediate with dihydroxyacetone-P of the active site.

The protein belongs to the class I fructose-bisphosphate aldolase family.

Its subcellular location is the plastid. The protein localises to the chloroplast. It carries out the reaction beta-D-fructose 1,6-bisphosphate = D-glyceraldehyde 3-phosphate + dihydroxyacetone phosphate. It functions in the pathway carbohydrate degradation; glycolysis; D-glyceraldehyde 3-phosphate and glycerone phosphate from D-glucose: step 4/4. The polypeptide is Fructose-bisphosphate aldolase 1, chloroplastic (ALDCHL) (Chlamydomonas reinhardtii (Chlamydomonas smithii)).